Here is a 348-residue protein sequence, read N- to C-terminus: Photosystem II protein D1 (348 aa).

3 consecutive transmembrane segments (helical) span residues 33–50, 122–137, and 146–160; these read YIGW…LATV, HFIL…EWEF, and WIFV…AASA. H122 contacts chlorophyll a. Y130 contributes to the pheophytin a binding site. 2 residues coordinate [CaMn4O5] cluster: D174 and E193. Residues 201–222 traverse the membrane as a helical segment; sequence FHILGVAAVFGGSLFSAMHGSL. Position 202 (H202) interacts with chlorophyll a. Residues H219 and 268–269 each bind a quinone; that span reads SF. H219 contacts Fe cation. Position 276 (H276) interacts with Fe cation. Residues 278 to 292 form a helical membrane-spanning segment; the sequence is FLAAWPVIGIWFTAL. 4 residues coordinate [CaMn4O5] cluster: H336, E337, D346, and A348.

This sequence belongs to the reaction center PufL/M/PsbA/D family. PSII is composed of 1 copy each of membrane proteins PsbA, PsbB, PsbC, PsbD, PsbE, PsbF, PsbH, PsbI, PsbJ, PsbK, PsbL, PsbM, PsbT, PsbX, PsbY, PsbZ, Psb30/Ycf12, at least 3 peripheral proteins of the oxygen-evolving complex and a large number of cofactors. It forms dimeric complexes. The D1/D2 heterodimer binds P680, chlorophylls that are the primary electron donor of PSII, and subsequent electron acceptors. It shares a non-heme iron and each subunit binds pheophytin, quinone, additional chlorophylls, carotenoids and lipids. D1 provides most of the ligands for the Mn4-Ca-O5 cluster of the oxygen-evolving complex (OEC). There is also a Cl(-1) ion associated with D1 and D2, which is required for oxygen evolution. The PSII complex binds additional chlorophylls, carotenoids and specific lipids. is required as a cofactor. Post-translationally, tyr-165 forms a radical intermediate that is referred to as redox-active TyrZ, YZ or Y-Z.

It is found in the plastid. It localises to the chloroplast thylakoid membrane. The enzyme catalyses 2 a plastoquinone + 4 hnu + 2 H2O = 2 a plastoquinol + O2. Photosystem II (PSII) is a light-driven water:plastoquinone oxidoreductase that uses light energy to abstract electrons from H(2)O, generating O(2) and a proton gradient subsequently used for ATP formation. It consists of a core antenna complex that captures photons, and an electron transfer chain that converts photonic excitation into a charge separation. The D1/D2 (PsbA/PsbD) reaction center heterodimer binds P680, the primary electron donor of PSII as well as several subsequent electron acceptors. The protein is Photosystem II protein D1 of Heterocapsa pygmaea (Dinoflagellate).